Consider the following 1025-residue polypeptide: Kinesin-like protein KIN-14P (1025 aa).

2 disordered regions span residues 1-87 and 263-286; these read MNPM…MHHG and YSQI…NEEE. Over residues 15 to 28 the composition is skewed to low complexity; that stretch reads STPRSPFSPFSPLS. The segment covering 29 to 41 has biased composition (basic and acidic residues); that stretch reads VDDRHRNHADTKT. The segment covering 42-53 has biased composition (low complexity); it reads PRSPFSPFSPLS. Residues 65–75 are compositionally biased toward polar residues; the sequence is KFQQALASSGQ. The stretch at 203–425 forms a coiled coil; it reads HEIATQQLRQ…REMEKKSESN (223 aa). Positions 270–286 are enriched in basic and acidic residues; it reads TKTEKSKWEEQKKNEEE. The Kinesin motor domain maps to 509–838; it reads NIRVFCRVRP…LKFAERVSGV (330 aa). 593 to 600 is an ATP binding site; the sequence is GQTGSGKT. Positions 847–879 form a coiled coil; it reads KEGKDVRDLMEQLASLKDTIARKDEEIERLQHQ. 3 disordered regions span residues 881-926, 939-977, and 994-1025; these read QRLQ…SAEA, AASM…RPLD, and TGLT…KRWA. Composition is skewed to polar residues over residues 901 to 913 and 939 to 948; these read SDTG…SRYS and AASMGTQGSI. Over residues 950-962 the composition is skewed to basic and acidic residues; that stretch reads VTKRPPRISDRAK. 2 stretches are compositionally biased toward low complexity: residues 963–974 and 998–1016; these read SVTAKSSTSVTR and SSSK…STSS.

The protein belongs to the TRAFAC class myosin-kinesin ATPase superfamily. Kinesin family. KIN-14 subfamily.

This chain is Kinesin-like protein KIN-14P, found in Arabidopsis thaliana (Mouse-ear cress).